The sequence spans 468 residues: Sulfate adenylyltransferase subunit 1 (468 aa).

In terms of domain architecture, tr-type G spans 22–239; the sequence is KELLRFLTCG…TVEIASDKNA (218 aa). The tract at residues 31–38 is G1; it reads GSVDDGKS. Position 31–38 (31–38) interacts with GTP; it reads GSVDDGKS. The interval 89-93 is G2; that stretch reads GITID. Residues 110-113 form a G3 region; the sequence is DTPG. GTP is bound by residues 110 to 114 and 165 to 168; these read DTPGH and NKMD. The tract at residues 165–168 is G4; that stretch reads NKMD. The G5 stretch occupies residues 202-204; the sequence is SAL.

The protein belongs to the TRAFAC class translation factor GTPase superfamily. Classic translation factor GTPase family. CysN/NodQ subfamily. Heterodimer composed of CysD, the smaller subunit, and CysN.

The enzyme catalyses sulfate + ATP + H(+) = adenosine 5'-phosphosulfate + diphosphate. It functions in the pathway sulfur metabolism; hydrogen sulfide biosynthesis; sulfite from sulfate: step 1/3. With CysD forms the ATP sulfurylase (ATPS) that catalyzes the adenylation of sulfate producing adenosine 5'-phosphosulfate (APS) and diphosphate, the first enzymatic step in sulfur assimilation pathway. APS synthesis involves the formation of a high-energy phosphoric-sulfuric acid anhydride bond driven by GTP hydrolysis by CysN coupled to ATP hydrolysis by CysD. The polypeptide is Sulfate adenylyltransferase subunit 1 (Teredinibacter turnerae (strain ATCC 39867 / T7901)).